The primary structure comprises 596 residues: Putative terpene synthase 2, chloroplastic (596 aa).

A chloroplast-targeting transit peptide spans 1 to 46 (MATLSMQVSTLSKQVKNLNTFGMGSASKLPMVARRVSTTRLRPICS). Mn(2+)-binding residues include D349 and D353. Residues 349–353 (DDVYD) carry the DDXXD motif motif. Homodimerization regions lie at residues 355-361 (YGTLDEL) and 427-464 (EAKW…FTLP). Mn(2+) is bound by residues D493 and E501.

This sequence belongs to the terpene synthase family. In terms of assembly, homodimer. It depends on Mn(2+) as a cofactor. Requires Mg(2+) as cofactor.

It is found in the plastid. The protein localises to the chloroplast. It functions in the pathway secondary metabolite biosynthesis; terpenoid biosynthesis. Its function is as follows. Putative monoterpene synthase inactive on geranyl diphosphate (GPP). The chain is Putative terpene synthase 2, chloroplastic from Thymus vulgaris (Thyme).